Consider the following 131-residue polypeptide: Fumarate reductase subunit C (131 aa).

A run of 3 helical transmembrane segments spans residues 30–50, 57–77, and 109–129; these read EGTAVPAVWFSIELIFGLFAL, WMGFVGFLQNPVVVILNLITL, and IIKGLWVVTAVVTVVILYVAL.

This sequence belongs to the FrdC family. In terms of assembly, part of an enzyme complex containing four subunits: a flavoprotein (FrdA), an iron-sulfur protein (FrdB), and two hydrophobic anchor proteins (FrdC and FrdD).

Its subcellular location is the cell inner membrane. Its function is as follows. Two distinct, membrane-bound, FAD-containing enzymes are responsible for the catalysis of fumarate and succinate interconversion; fumarate reductase is used in anaerobic growth, and succinate dehydrogenase is used in aerobic growth. Anchors the catalytic components of the fumarate reductase complex to the cell inner membrane, binds quinones. The chain is Fumarate reductase subunit C from Salmonella heidelberg (strain SL476).